The following is a 681-amino-acid chain: T-box-containing protein 2 (681 aa).

Residues 149–323 constitute a DNA-binding region (T-box); that stretch reads LWDQFSRAGT…NNPFAKGFRE (175 aa). Disordered stretches follow at residues 316-351, 456-489, 521-558, and 589-611; these read PFAK…EQRR, GITS…NQSN, PNIN…LIPG, and ESGE…CQSG. Positions 470-489 are enriched in low complexity; it reads NSFTYYNSSSPSSSDSNQSN. Residues 521-534 are compositionally biased toward polar residues; it reads PNINIPNTVETNVH.

Monomer. In terms of tissue distribution, differentiating muscle and tailbud tip.

The protein resides in the nucleus. Involved in the transcriptional regulation of genes required for muscle differentiation. Binds to a palindromic site (called T site) and activates gene transcription when bound to such a site. The polypeptide is T-box-containing protein 2 (T2) (Halocynthia roretzi (Sea squirt)).